Here is a 132-residue protein sequence, read N- to C-terminus: uncharacterized protein (132 aa).

In terms of domain architecture, BIG2 spans 45–115 (VHMEKHKLKI…VVIVTTAEGK (71 aa)).

It to B.anthracis BA1245.

This is an uncharacterized protein from Bacillus cereus (strain ATCC 14579 / DSM 31 / CCUG 7414 / JCM 2152 / NBRC 15305 / NCIMB 9373 / NCTC 2599 / NRRL B-3711).